Here is a 287-residue protein sequence, read N- to C-terminus: Diaminopimelate epimerase (287 aa).

The substrate site is built by Asn-15 and Asn-66. The active-site Proton donor is Cys-75. Substrate is bound by residues 76–77, Asn-170, Asn-203, and 221–222; these read GN and ER. Catalysis depends on Cys-230, which acts as the Proton acceptor. Position 231-232 (231-232) interacts with substrate; the sequence is GT.

Belongs to the diaminopimelate epimerase family. As to quaternary structure, homodimer.

Its subcellular location is the cytoplasm. It carries out the reaction (2S,6S)-2,6-diaminopimelate = meso-2,6-diaminopimelate. It participates in amino-acid biosynthesis; L-lysine biosynthesis via DAP pathway; DL-2,6-diaminopimelate from LL-2,6-diaminopimelate: step 1/1. Functionally, catalyzes the stereoinversion of LL-2,6-diaminopimelate (L,L-DAP) to meso-diaminopimelate (meso-DAP), a precursor of L-lysine and an essential component of the bacterial peptidoglycan. This Desulfovibrio desulfuricans (strain ATCC 27774 / DSM 6949 / MB) protein is Diaminopimelate epimerase.